We begin with the raw amino-acid sequence, 393 residues long: Bifunctional enzyme Fae/Hps (393 aa).

The interval 1–161 is formaldehyde-activating enzyme; the sequence is MYLIGEALVG…HEKDRAAHAV (161 aa). The active-site Proton donor is His17. Residues Asp19, Leu48, Lys66, Thr68, and Gln83 each coordinate substrate. The 3-hexulose-6-phosphate synthase stretch occupies residues 162–393; that stretch reads MGFKVQRLWD…IDQFRIMTDF (232 aa).

It in the N-terminal section; belongs to the formaldehyde-activating enzyme family. The protein in the C-terminal section; belongs to the HPS/KGPDC family. HPS subfamily.

The catalysed reaction is 5,6,7,8-tetrahydromethanopterin + formaldehyde = 5,10-methylenetetrahydromethanopterin + H2O. It catalyses the reaction D-ribulose 5-phosphate + formaldehyde = D-arabino-hex-3-ulose 6-phosphate. The protein operates within carbohydrate biosynthesis; D-ribose 5-phosphate biosynthesis. Functionally, catalyzes the condensation of formaldehyde with tetrahydromethanopterin (H(4)MPT) to 5,10-methylenetetrahydromethanopterin. Catalyzes the reversible formation of ribulose-5-phosphate and formaldehyde from 3-hexulose-6-phosphate. The polypeptide is Bifunctional enzyme Fae/Hps (Methanoculleus marisnigri (strain ATCC 35101 / DSM 1498 / JR1)).